A 524-amino-acid polypeptide reads, in one-letter code: Peptide chain release factor 3 (524 aa).

In terms of domain architecture, tr-type G spans 11–278 (AKRRTFAIIS…SFVQYAPEPG (268 aa)). GTP contacts are provided by residues 20–27 (SHPDAGKT), 88–92 (DTPGH), and 142–145 (NKLD).

Belongs to the TRAFAC class translation factor GTPase superfamily. Classic translation factor GTPase family. PrfC subfamily.

Its subcellular location is the cytoplasm. Its function is as follows. Increases the formation of ribosomal termination complexes and stimulates activities of RF-1 and RF-2. It binds guanine nucleotides and has strong preference for UGA stop codons. It may interact directly with the ribosome. The stimulation of RF-1 and RF-2 is significantly reduced by GTP and GDP, but not by GMP. This is Peptide chain release factor 3 from Lacticaseibacillus paracasei (strain ATCC 334 / BCRC 17002 / CCUG 31169 / CIP 107868 / KCTC 3260 / NRRL B-441) (Lactobacillus paracasei).